We begin with the raw amino-acid sequence, 483 residues long: Proline--tRNA ligase (483 aa).

The protein belongs to the class-II aminoacyl-tRNA synthetase family. ProS type 3 subfamily. Homodimer.

The protein resides in the cytoplasm. It carries out the reaction tRNA(Pro) + L-proline + ATP = L-prolyl-tRNA(Pro) + AMP + diphosphate. In terms of biological role, catalyzes the attachment of proline to tRNA(Pro) in a two-step reaction: proline is first activated by ATP to form Pro-AMP and then transferred to the acceptor end of tRNA(Pro). The polypeptide is Proline--tRNA ligase (Sulfolobus acidocaldarius (strain ATCC 33909 / DSM 639 / JCM 8929 / NBRC 15157 / NCIMB 11770)).